The sequence spans 331 residues: Biotin synthase (331 aa).

The region spanning 53 to 271 is the Radical SAM core domain; sequence TELQLSQLLS…IAVARIVCPK (219 aa). [4Fe-4S] cluster-binding residues include Cys-68, Cys-72, and Cys-75. [2Fe-2S] cluster contacts are provided by Cys-112, Cys-143, Cys-203, and Arg-275.

Belongs to the radical SAM superfamily. Biotin synthase family. In terms of assembly, homodimer. [4Fe-4S] cluster is required as a cofactor. The cofactor is [2Fe-2S] cluster.

The catalysed reaction is (4R,5S)-dethiobiotin + (sulfur carrier)-SH + 2 reduced [2Fe-2S]-[ferredoxin] + 2 S-adenosyl-L-methionine = (sulfur carrier)-H + biotin + 2 5'-deoxyadenosine + 2 L-methionine + 2 oxidized [2Fe-2S]-[ferredoxin]. The protein operates within cofactor biosynthesis; biotin biosynthesis; biotin from 7,8-diaminononanoate: step 2/2. In terms of biological role, catalyzes the conversion of dethiobiotin (DTB) to biotin by the insertion of a sulfur atom into dethiobiotin via a radical-based mechanism. This chain is Biotin synthase, found in Phenylobacterium zucineum (strain HLK1).